Consider the following 150-residue polypeptide: Arginine repressor (150 aa).

The protein belongs to the ArgR family.

It is found in the cytoplasm. It participates in amino-acid biosynthesis; L-arginine biosynthesis [regulation]. In terms of biological role, regulates arginine biosynthesis genes. The chain is Arginine repressor from Psychromonas ingrahamii (strain DSM 17664 / CCUG 51855 / 37).